Consider the following 418-residue polypeptide: Hydroxysteroid dehydrogenase-like protein 2 (418 aa).

Residues Gly-17 to Gly-23, Lys-42, and Asp-74 each bind NADP(+). N6-(2-hydroxyisobutyryl)lysine is present on Lys-42. An N6-acetyllysine modification is found at Lys-116. Tyr-168 (proton acceptor) is an active-site residue. Lys-172 contributes to the NADP(+) binding site. A disordered region spans residues Ser-287–Val-310. One can recognise an SCP2 domain in the interval Arg-306–Asn-415. N6-succinyllysine is present on Lys-318.

The protein belongs to the short-chain dehydrogenases/reductases (SDR) family.

The protein resides in the peroxisome. Its subcellular location is the mitochondrion. Its function is as follows. Has apparently no steroid dehydrogenase activity. Controls bile acid (BA) and lipid metabolism in response to nutritional cues. This Pongo abelii (Sumatran orangutan) protein is Hydroxysteroid dehydrogenase-like protein 2 (HSDL2).